Here is a 232-residue protein sequence, read N- to C-terminus: Protein INAPERTURATE POLLEN 1 homolog (232 aa).

Interacts with LECRKS7/DAF1.

The protein localises to the cytoplasm. Functionally, required for pollen aperture formation, male fertility and LECRKS7/DAF1 function. Seems to be involved in operculum protrusion. Participates in the modification of plasma membrane at future aperture sites, possibly by creating close contact between the plasma membrane and callose wall to prevent primexine formation and sporopollenin deposition. This Oryza sativa subsp. japonica (Rice) protein is Protein INAPERTURATE POLLEN 1 homolog.